The primary structure comprises 452 residues: MMGCFALQTVDTELTADSVEWCPLQGCRHLLACGTYQLRRPEDRPAGPQNKGGMEVKEPQVRLGRLFLYSFNDNNSIHPLVEVQRKDTSAILDMKWCHIPVAGHALLGLADASGSIQLLRLVESEKSHVLEPLSSLALEEQCLALSLDWSTGKTGRAGDQPLKIISSDSTGQLHLLMVNETRPRLQKVASWQAHQFEAWIAAFNYWHPEIVYSGGDDGLLRGWDTRVPGKFLFTSKRHTMGVCSIQSSPHREHILATGSYDEHILLWDTRNMKQPLADTPVQGGVWRIKWHPFHHHLLLAACMHSGFKILNCQKAMEERQEATVLTSHTLPDSLVYGADWSWLLFRSLQRAPSWSFPSNLGTKTADLKGASELPTPCHECREDNDGEGHARPQSGMKPLTEGMRKNGTWLQATAATTRDCGVNPEEADSAFSLLATCSFYDHALHLWEWEGN.

7 WD repeats span residues 79-130 (PLVE…SHVL), 131-185 (EPLS…RPRL), 186-229 (QKVA…RVPG), 230-273 (KFLF…RNMK), 274-313 (QPLADTPVQGGVWRIKWHPFHHHLLLAACMHSGFKILNCQ), 314-403 (KAME…TEGM), and 404-448 (RKNG…HLWE). Serine 353 bears the Phosphoserine mark. The disordered stretch occupies residues 371–402 (SELPTPCHECREDNDGEGHARPQSGMKPLTEG). Residues 378–390 (HECREDNDGEGHA) show a composition bias toward basic and acidic residues.

It belongs to the DPH7 family. In terms of assembly, interacts with INCA1.

The enzyme catalyses diphthine methyl ester-[translation elongation factor 2] + H2O = diphthine-[translation elongation factor 2] + methanol + H(+). It functions in the pathway protein modification; peptidyl-diphthamide biosynthesis. In terms of biological role, catalyzes the demethylation of diphthine methyl ester to form diphthine, an intermediate diphthamide biosynthesis, a post-translational modification of histidine which occurs in translation elongation factor 2 (EEF2) which can be ADP-ribosylated by diphtheria toxin and by Pseudomonas exotoxin A (Eta). The chain is Diphthine methyltransferase (DPH7) from Homo sapiens (Human).